Reading from the N-terminus, the 826-residue chain is Zinc phosphodiesterase ELAC protein 2 (826 aa).

Residues 1–16 (MWALCSLLRSATGRTM) constitute a mitochondrion transit peptide. Residues 15-27 (TMSQGRTISQGSA) show a composition bias toward polar residues. Disordered stretches follow at residues 15–53 (TMSQ…GSSG) and 187–231 (SEQR…VSQR). A phosphoserine mark is found at Ser-199, Ser-208, Ser-212, Ser-229, Ser-618, and Ser-736. Over residues 208-224 (SPERSSDSESNESEPHL) the composition is skewed to basic and acidic residues. The interval 798–826 (ALTDDLEDGEPQQKRAHTEEPQSKKVRAQ) is disordered. The span at 808-820 (PQQKRAHTEEPQS) shows a compositional bias: basic and acidic residues.

It belongs to the RNase Z family. In terms of assembly, homodimer. Interacts with PTCD1. Zn(2+) serves as cofactor.

It is found in the mitochondrion. Its subcellular location is the mitochondrion matrix. It localises to the mitochondrion nucleoid. The protein resides in the nucleus. It carries out the reaction Endonucleolytic cleavage of RNA, removing extra 3' nucleotides from tRNA precursor, generating 3' termini of tRNAs. A 3'-hydroxy group is left at the tRNA terminus and a 5'-phosphoryl group is left at the trailer molecule.. Zinc phosphodiesterase, which displays mitochondrial tRNA 3'-processing endonuclease activity. Involved in tRNA maturation, by removing a 3'-trailer from precursor tRNA. Associates with mitochondrial DNA complexes at the nucleoids to initiate RNA processing and ribosome assembly. The chain is Zinc phosphodiesterase ELAC protein 2 (ELAC2) from Macaca fascicularis (Crab-eating macaque).